We begin with the raw amino-acid sequence, 238 residues long: MLVLFVATWSDLGLCKKRPKPGGWNTGGSRYPGQGSPGGNRYPPQGGGGWGQPHGGGWGQPHGGGWGQPHGGGWGQGGGTHNQWHKPSKPKTSMKHMAGAAAAGAVVGGLGGYMLGSAMSRPLIHFGNDYEDRYYRENMYRYPNQVYYRPVDQYSNQNNFVHDCVNITIKQHTVTTTTKGENFTETDVKMMERVVEQMCITQYQKESQAYYQRGSSIVLFSSPPVILLISFLIFLIVG.

The N-terminal stretch at 1 to 15 (MLVLFVATWSDLGLC) is a signal peptide. Residues 16 to 215 (KKRPKPGGWN…ESQAYYQRGS (200 aa)) form an interaction with GRB2, ERI3 and SYN1 region. The tract at residues 18–93 (RPKPGGWNTG…WHKPSKPKTS (76 aa)) is disordered. 4 consecutive repeat copies span residues 44–52 (PQGGGGWGQ), 53–60 (PHGGGWGQ), 61–68 (PHGGGWGQ), and 69–76 (PHGGGWGQ). Positions 44–83 (PQGGGGWGQPHGGGWGQPHGGGWGQPHGGGWGQGGGTHNQ) are 4 X 8 AA tandem repeats of P-H-G-G-G-W-G-Q. The segment covering 45–80 (QGGGGWGQPHGGGWGQPHGGGWGQPHGGGWGQGGGT) has biased composition (gly residues). Residues Gly47, Gly48, His54, Gly55, Gly56, His62, Gly63, Gly64, His70, Gly71, and Gly72 each coordinate Cu(2+). Positions 83-93 (QWHKPSKPKTS) are enriched in basic residues. Cys164 and Cys199 are oxidised to a cystine. N-linked (GlcNAc...) asparagine glycans are attached at residues Asn166 and Asn182. Ser215 carries GPI-anchor amidated serine lipidation. Positions 216 to 238 (SIVLFSSPPVILLISFLIFLIVG) are cleaved as a propeptide — removed in mature form.

This sequence belongs to the prion family. In terms of assembly, monomer and homodimer. Has a tendency to aggregate into amyloid fibrils containing a cross-beta spine, formed by a steric zipper of superposed beta-strands. Soluble oligomers may represent an intermediate stage on the path to fibril formation. Copper binding may promote oligomerization. Interacts with GRB2, APP, ERI3/PRNPIP and SYN1. Mislocalized cytosolically exposed PrP interacts with MGRN1; this interaction alters MGRN1 subcellular location and causes lysosomal enlargement. Interacts with KIAA1191.

It is found in the cell membrane. It localises to the golgi apparatus. In terms of biological role, its primary physiological function is unclear. Has cytoprotective activity against internal or environmental stresses. May play a role in neuronal development and synaptic plasticity. May be required for neuronal myelin sheath maintenance. May play a role in iron uptake and iron homeostasis. Soluble oligomers are toxic to cultured neuroblastoma cells and induce apoptosis (in vitro). Association with GPC1 (via its heparan sulfate chains) targets PRNP to lipid rafts. Also provides Cu(2+) or Zn(2+) for the ascorbate-mediated GPC1 deaminase degradation of its heparan sulfate side chains. This chain is Major prion protein (PRNP), found in Theropithecus gelada (Gelada baboon).